The primary structure comprises 311 residues: MSSRRKPEWLKMRPPSGERFTDIKETLRDNDLHTVCEEASCPNMGECWSGRDGPGTATFMLMGDRCSRGCNFCDVKTGGMEPLDPDEPANVAESVAEIGLDYVVLTSVDRDDLDDQGAGHFARTIREIKERDPSILVEVLIPDFQGEKSLVQKIIDAGPDVIAHNIETVARRQVPVRDRRAGYEQSLSVLEYVTRESDIYTKTSIMLGVGEYDHEVYQTLGDLREAGVDVVTLGQYLQPSRSHLDVADYVHPQKFETWQRVAESEFGFLYCASGPMVRSSYKAGELFVDAVLREGKSVQEARRNARRAASE.

[4Fe-4S] cluster-binding residues include Cys-36, Cys-41, Cys-47, Cys-66, Cys-70, Cys-73, and Ser-280. Residues 51–269 (RDGPGTATFM…RVAESEFGFL (219 aa)) form the Radical SAM core domain.

The protein belongs to the radical SAM superfamily. Lipoyl synthase family. The cofactor is [4Fe-4S] cluster.

The protein resides in the cytoplasm. The catalysed reaction is [[Fe-S] cluster scaffold protein carrying a second [4Fe-4S](2+) cluster] + N(6)-octanoyl-L-lysyl-[protein] + 2 oxidized [2Fe-2S]-[ferredoxin] + 2 S-adenosyl-L-methionine + 4 H(+) = [[Fe-S] cluster scaffold protein] + N(6)-[(R)-dihydrolipoyl]-L-lysyl-[protein] + 4 Fe(3+) + 2 hydrogen sulfide + 2 5'-deoxyadenosine + 2 L-methionine + 2 reduced [2Fe-2S]-[ferredoxin]. The protein operates within protein modification; protein lipoylation via endogenous pathway; protein N(6)-(lipoyl)lysine from octanoyl-[acyl-carrier-protein]: step 2/2. Functionally, catalyzes the radical-mediated insertion of two sulfur atoms into the C-6 and C-8 positions of the octanoyl moiety bound to the lipoyl domains of lipoate-dependent enzymes, thereby converting the octanoylated domains into lipoylated derivatives. The polypeptide is Lipoyl synthase (Halobacterium salinarum (strain ATCC 29341 / DSM 671 / R1)).